We begin with the raw amino-acid sequence, 312 residues long: Malate dehydrogenase (312 aa).

NAD(+) is bound by residues 12-17 and Asp-36; that span reads GSGFTG. The substrate site is built by Arg-87 and Arg-93. NAD(+) contacts are provided by residues Asn-100 and 123-125; that span reads LTN. Position 125 (Asn-125) interacts with substrate. Ser-149 bears the Phosphoserine mark. Residue Arg-156 coordinates substrate. The active-site Proton acceptor is the His-180.

Belongs to the LDH/MDH superfamily. MDH type 3 family.

It catalyses the reaction (S)-malate + NAD(+) = oxaloacetate + NADH + H(+). Functionally, catalyzes the reversible oxidation of malate to oxaloacetate. This is Malate dehydrogenase from Oceanobacillus iheyensis (strain DSM 14371 / CIP 107618 / JCM 11309 / KCTC 3954 / HTE831).